The following is a 146-amino-acid chain: Snaclec stejaggregin-B subunit beta-1 (146 aa).

A signal peptide spans 1 to 23 (MGRFIFVSFGLLVVFLSLSGTGA). Intrachain disulfides connect C25–C36, C53–C142, and C119–C134. The 112-residue stretch at 32 to 143 (YDLYCYRVFQ…CSQTYPFVCK (112 aa)) folds into the C-type lectin domain.

Belongs to the snaclec family. In terms of assembly, heteromultimer; disulfide-linked. Expressed by the venom gland.

It localises to the secreted. Its function is as follows. Interferes with one step of hemostasis (modulation of platelet aggregation, or coagulation cascade, for example). This chain is Snaclec stejaggregin-B subunit beta-1, found in Trimeresurus stejnegeri (Chinese green tree viper).